The chain runs to 230 residues: N-(5'-phosphoribosyl)anthranilate isomerase (230 aa).

This sequence belongs to the TrpF family.

The catalysed reaction is N-(5-phospho-beta-D-ribosyl)anthranilate = 1-(2-carboxyphenylamino)-1-deoxy-D-ribulose 5-phosphate. The protein operates within amino-acid biosynthesis; L-tryptophan biosynthesis; L-tryptophan from chorismate: step 3/5. The polypeptide is N-(5'-phosphoribosyl)anthranilate isomerase (Ralstonia nicotianae (strain ATCC BAA-1114 / GMI1000) (Ralstonia solanacearum)).